Consider the following 1412-residue polypeptide: DNA-directed RNA polymerase subunit beta' (1412 aa).

Residues Cys70, Cys72, Cys85, and Cys88 each coordinate Zn(2+). Residues Asp458, Asp460, and Asp462 each contribute to the Mg(2+) site. Cys813, Cys887, Cys894, and Cys897 together coordinate Zn(2+). The segment at 1388–1412 (EQALLTPATTAEAVVGEEPAPPPAQ) is disordered. Residues 1393 to 1405 (TPATTAEAVVGEE) show a composition bias toward low complexity.

Belongs to the RNA polymerase beta' chain family. The RNAP catalytic core consists of 2 alpha, 1 beta, 1 beta' and 1 omega subunit. When a sigma factor is associated with the core the holoenzyme is formed, which can initiate transcription. Mg(2+) is required as a cofactor. Requires Zn(2+) as cofactor.

The catalysed reaction is RNA(n) + a ribonucleoside 5'-triphosphate = RNA(n+1) + diphosphate. In terms of biological role, DNA-dependent RNA polymerase catalyzes the transcription of DNA into RNA using the four ribonucleoside triphosphates as substrates. The polypeptide is DNA-directed RNA polymerase subunit beta' (Methylibium petroleiphilum (strain ATCC BAA-1232 / LMG 22953 / PM1)).